Reading from the N-terminus, the 333-residue chain is Probable tRNA pseudouridine synthase B (333 aa).

The active-site Nucleophile is the D66. Residues 233–308 (LKKIIVKDSA…EVVEITRVIM (76 aa)) enclose the PUA domain.

It belongs to the pseudouridine synthase TruB family. Type 2 subfamily.

It catalyses the reaction uridine(55) in tRNA = pseudouridine(55) in tRNA. Its function is as follows. Could be responsible for synthesis of pseudouridine from uracil-55 in the psi GC loop of transfer RNAs. This chain is Probable tRNA pseudouridine synthase B, found in Methanococcus maripaludis (strain C7 / ATCC BAA-1331).